A 122-amino-acid polypeptide reads, in one-letter code: Modulator protein MzrA (122 aa).

Residues 1 to 10 (MKILTRIPRR) lie on the Cytoplasmic side of the membrane. The chain crosses the membrane as a helical span at residues 11–31 (LLPWLLGGALALVAVSFAPAL). Topologically, residues 32–122 (LSHETVVQIR…NQDANRSIYS (91 aa)) are periplasmic.

The protein belongs to the MzrA family. In terms of assembly, interacts with EnvZ.

The protein localises to the cell inner membrane. Modulates the activity of the EnvZ/OmpR two-component regulatory system, probably by directly modulating EnvZ enzymatic activity and increasing stability of phosphorylated OmpR. The polypeptide is Modulator protein MzrA (Pantoea sp. (strain At-9b)).